Reading from the N-terminus, the 482-residue chain is Iroquois-class homeodomain protein irx-5 (482 aa).

The homeobox DNA-binding region spans 109–171 (DPAYRKNATR…NARRRLKKEN (63 aa)). Disordered regions lie at residues 173–307 (MTWT…HQSH) and 462–482 (QSQA…MSSI). Positions 182–198 (EDEEDDENIDLEKNEED) are enriched in acidic residues. Basic and acidic residues predominate over residues 199–256 (DPRKLEEKGDQDGDAGDQKRSPSAVDFDRLEGEVRQGKELDQTRSDSEQNEVEERNDL). Positions 264 to 273 (PTSPLCPPDQ) are enriched in pro residues. The span at 284-305 (HRHTVHNHHHQSIQQLHHHSHQ) shows a compositional bias: basic residues. The span at 467–482 (LNKDTPYEMKKGMSSI) shows a compositional bias: basic and acidic residues.

This sequence belongs to the TALE/IRO homeobox family. Expressed in the neural plate in overlapping patterns with other irx members, which all share an anterior border of expression. Broadly expressed in the tailbud rhombencephalon (hindbrain). Outside the nervous system and at tailbud stages, expressed in the developing otic vesicle and branchial arches.

The protein resides in the nucleus. Functionally, acts partially redundantly with other irx members in neural patterning. Required for formation of the posterior forebrain, midbrain, hindbrain, and to a lesser extent, spinal cord. Patterns the neuroectoderm in both the anterior/posterior and dorsal/ventral axes. Does not appear to play a role in pronephros kidney development. Involved in craniofacial and gonadal development. Modulates the migration of progenitor cell populations in branchial arches and gonads by repressing CXCL12. The chain is Iroquois-class homeodomain protein irx-5 from Xenopus tropicalis (Western clawed frog).